Here is a 198-residue protein sequence, read N- to C-terminus: Recombination protein RecR (198 aa).

The C4-type zinc finger occupies 57 to 72 (CQRCNTFSEAELCAIC). A Toprim domain is found at 80 to 175 (DQLCIVEMPA…TVTRIARGMP (96 aa)).

It belongs to the RecR family.

In terms of biological role, may play a role in DNA repair. It seems to be involved in an RecBC-independent recombinational process of DNA repair. It may act with RecF and RecO. In Chromobacterium violaceum (strain ATCC 12472 / DSM 30191 / JCM 1249 / CCUG 213 / NBRC 12614 / NCIMB 9131 / NCTC 9757 / MK), this protein is Recombination protein RecR.